The sequence spans 120 residues: UPF0102 protein Moth_0988 (120 aa).

The protein belongs to the UPF0102 family.

The protein is UPF0102 protein Moth_0988 of Moorella thermoacetica (strain ATCC 39073 / JCM 9320).